Here is a 239-residue protein sequence, read N- to C-terminus: Ribosomal RNA small subunit methyltransferase G (239 aa).

S-adenosyl-L-methionine is bound by residues G79, F84, 130-131 (AE), and R149.

This sequence belongs to the methyltransferase superfamily. RNA methyltransferase RsmG family.

Its subcellular location is the cytoplasm. In terms of biological role, specifically methylates the N7 position of a guanine in 16S rRNA. In Lactobacillus johnsonii (strain CNCM I-12250 / La1 / NCC 533), this protein is Ribosomal RNA small subunit methyltransferase G.